Here is a 257-residue protein sequence, read N- to C-terminus: 3-deoxy-manno-octulosonate cytidylyltransferase (257 aa).

This sequence belongs to the KdsB family.

The protein localises to the cytoplasm. The enzyme catalyses 3-deoxy-alpha-D-manno-oct-2-ulosonate + CTP = CMP-3-deoxy-beta-D-manno-octulosonate + diphosphate. Its pathway is nucleotide-sugar biosynthesis; CMP-3-deoxy-D-manno-octulosonate biosynthesis; CMP-3-deoxy-D-manno-octulosonate from 3-deoxy-D-manno-octulosonate and CTP: step 1/1. The protein operates within bacterial outer membrane biogenesis; lipopolysaccharide biosynthesis. Activates KDO (a required 8-carbon sugar) for incorporation into bacterial lipopolysaccharide in Gram-negative bacteria. The sequence is that of 3-deoxy-manno-octulosonate cytidylyltransferase from Xylella fastidiosa (strain M23).